A 200-amino-acid polypeptide reads, in one-letter code: Putative peroxiredoxin sll0755 (200 aa).

Residues 5-163 (LRVGQPAPDF…TLRVLKAIRH (159 aa)) enclose the Thioredoxin domain. Residue C50 is the Cysteine sulfenic acid (-SOH) intermediate of the active site.

It belongs to the peroxiredoxin family. AhpC/Prx1 subfamily. In terms of assembly, homodimer; disulfide-linked, upon oxidation.

It is found in the cytoplasm. It carries out the reaction a hydroperoxide + [thioredoxin]-dithiol = an alcohol + [thioredoxin]-disulfide + H2O. Its function is as follows. Thiol-specific peroxidase that catalyzes the reduction of hydrogen peroxide and organic hydroperoxides to water and alcohols, respectively. Plays a role in cell protection against oxidative stress by detoxifying peroxides. This is Putative peroxiredoxin sll0755 from Synechocystis sp. (strain ATCC 27184 / PCC 6803 / Kazusa).